Here is a 231-residue protein sequence, read N- to C-terminus: Orotate phosphoribosyltransferase (231 aa).

Lys29 is a 5-phospho-alpha-D-ribose 1-diphosphate binding site. Orotate is bound at residue 37–38 (FF). Residues 75 to 76 (YK), Arg107, Lys108, Lys111, His113, and 133 to 141 (DDVISRCTA) contribute to the 5-phospho-alpha-D-ribose 1-diphosphate site. Orotate contacts are provided by Ser137 and Arg165.

This sequence belongs to the purine/pyrimidine phosphoribosyltransferase family. PyrE subfamily. Homodimer.

The catalysed reaction is orotidine 5'-phosphate + diphosphate = orotate + 5-phospho-alpha-D-ribose 1-diphosphate. Its pathway is pyrimidine metabolism; UMP biosynthesis via de novo pathway; UMP from orotate: step 1/2. Functionally, catalyzes the transfer of a ribosyl phosphate group from 5-phosphoribose 1-diphosphate to orotate, leading to the formation of orotidine monophosphate (OMP). The polypeptide is Orotate phosphoribosyltransferase (URA5) (Podospora anserina (Pleurage anserina)).